A 125-amino-acid polypeptide reads, in one-letter code: Holo-[acyl-carrier-protein] synthase (125 aa).

Residues Asp8 and Glu57 each coordinate Mg(2+).

Belongs to the P-Pant transferase superfamily. AcpS family. Requires Mg(2+) as cofactor.

It is found in the cytoplasm. The catalysed reaction is apo-[ACP] + CoA = holo-[ACP] + adenosine 3',5'-bisphosphate + H(+). In terms of biological role, transfers the 4'-phosphopantetheine moiety from coenzyme A to a Ser of acyl-carrier-protein. This Koribacter versatilis (strain Ellin345) protein is Holo-[acyl-carrier-protein] synthase.